The following is a 558-amino-acid chain: Cytochrome P450 monooxygenase sdnT (558 aa).

A helical membrane pass occupies residues 21-41; sequence IISLTTCFVCAFAVSFVALAI. The segment at 298–317 is disordered; it reads QNAGSNTRPKPPKRKQDTQP. Asn464 and Asn495 each carry an N-linked (GlcNAc...) asparagine glycan. Cys505 lines the heme pocket.

This sequence belongs to the cytochrome P450 family. Requires heme as cofactor.

The protein localises to the membrane. It participates in antibiotic biosynthesis. Functionally, cytochrome P450 monooxygenase; part of the gene cluster that mediates the biosynthesis of sordarin and hypoxysordarin, glycoside antibiotics with a unique tetracyclic diterpene aglycone structure. First, the geranylgeranyl diphosphate synthase sdnC constructs GGDP from farnesyl diphosphate and isopentenyl diphosphate. The diterpene cyclase sdnA then catalyzes the cyclization of GGDP to afford cycloaraneosene. Cycloaraneosene is then hydroxylated four times by the putative cytochrome P450 monooxygenases sdnB, sdnE, sdnF and sdnH to give a hydroxylated cycloaraneosene derivative such as cycloaraneosene-8,9,13,19-tetraol. Although the order of the hydroxylations is unclear, at least C8, C9 and C13 of the cycloaraneosene skeleton are hydroxylated before the sordaricin formation. Dehydration of the 13-hydroxy group of the hydroxylated cycloaraneosene derivative might be catalyzed by an unassigned hypothetical protein such as sdnG and sdnP to construct the cyclopentadiene moiety. The FAD-dependent oxidoreductase sdnN is proposed to catalyze the oxidation at C9 of the hydroxylated cycloaraneosene derivative and also catalyze the Baeyer-Villiger oxidation to give the lactone intermediate. The presumed lactone intermediate would be hydrolyzed to give an acrolein moiety and a carboxylate moiety. Then, [4+2]cycloaddition would occur between the acrolein moiety and the cyclopentadiene moiety to give sordaricin. SdnN might also be involved in the [4+2]cycloaddition after the hypothesized oxidation to accommodate the oxidized product and prompt the [4+2]cycloaddition. GDP-6-deoxy-D-altrose may be biosynthesized from GDP-D-mannose by the putative GDP-mannose-4,6-dehydratase sdnI and the short-chain dehydrogenase sdnK. The glycosyltransferase sdnJ catalyzes the attachment of 6-deoxy-D-altrose onto the 19-hydroxy group of sordaricin to give 4'-O-demethylsordarin. The methyltransferase sdnD would complete the biosynthesis of sordarin. Sordarin can be further modified into hypoxysordarin. The unique acyl chain at the 3'-hydroxy group of hypoxysordarin would be constructed by an iterative type I PKS sdnO and the trans-acting polyketide methyltransferase sdnL. SdnL would be responsible for the introduction of an alpha-methyl group of the polyketide chain. Alternatively, the beta-lactamase-like protein sdnR might be responsible for the cleavage and transfer of the polyketide chain from the PKS sdnO to sordarin. Two putative cytochrome P450 monooxygenases, sdnQ and sdnT, might catalyze the epoxidations of the polyketide chain to complete the biosynthesis of hypoxysordarin. Transcriptional regulators sdnM and sdnS are presumably encoded for the transcriptional regulation of the expression of the sdn gene cluster. This Sordaria araneosa (Pleurage araneosa) protein is Cytochrome P450 monooxygenase sdnT.